The following is a 472-amino-acid chain: tRNA-2-methylthio-N(6)-dimethylallyladenosine synthase (472 aa).

Positions 1 to 24 are disordered; the sequence is MTGTPDVFPPATPGGTPLVALPAG. The MTTase N-terminal domain maps to 33–150; sequence GKLYIKTHGC…LPELIRARRE (118 aa). The [4Fe-4S] cluster site is built by Cys-42, Cys-79, Cys-113, Cys-187, Cys-191, and Cys-194. The 235-residue stretch at 173 to 407 folds into the Radical SAM core domain; the sequence is RADGASAFVS…RINAHAAGIS (235 aa). Positions 408–471 constitute a TRAM domain; that stretch reads EKMVGTVQTV…TNSLRARVVA (64 aa).

This sequence belongs to the methylthiotransferase family. MiaB subfamily. In terms of assembly, monomer. [4Fe-4S] cluster serves as cofactor.

Its subcellular location is the cytoplasm. It catalyses the reaction N(6)-dimethylallyladenosine(37) in tRNA + (sulfur carrier)-SH + AH2 + 2 S-adenosyl-L-methionine = 2-methylsulfanyl-N(6)-dimethylallyladenosine(37) in tRNA + (sulfur carrier)-H + 5'-deoxyadenosine + L-methionine + A + S-adenosyl-L-homocysteine + 2 H(+). Its function is as follows. Catalyzes the methylthiolation of N6-(dimethylallyl)adenosine (i(6)A), leading to the formation of 2-methylthio-N6-(dimethylallyl)adenosine (ms(2)i(6)A) at position 37 in tRNAs that read codons beginning with uridine. The chain is tRNA-2-methylthio-N(6)-dimethylallyladenosine synthase from Stenotrophomonas maltophilia (strain R551-3).